Consider the following 325-residue polypeptide: UPF0164 protein TP_0856 (325 aa).

The first 28 residues, 1–28, serve as a signal peptide directing secretion; sequence MVHYKSVFYKSAALVCGFVLAGASVAIA.

It belongs to the UPF0164 family.

The protein is UPF0164 protein TP_0856 of Treponema pallidum (strain Nichols).